A 396-amino-acid chain; its full sequence is Tyrosine--tRNA ligase (396 aa).

The 'HIGH' region signature appears at 43–52; the sequence is PSSPDIHLGH. A 'KMSKS' region motif is present at residues 227 to 231; sequence KMSKS. An ATP-binding site is contributed by lysine 230. The S4 RNA-binding domain occupies 338–396; the sequence is ICVIDFIIKADLAKSKSEARRLLEQGGVEINSAKISDPGTTVKCGDIIKAGKRRYSKAV.

It belongs to the class-I aminoacyl-tRNA synthetase family. TyrS type 2 subfamily. In terms of assembly, homodimer.

It is found in the cytoplasm. It catalyses the reaction tRNA(Tyr) + L-tyrosine + ATP = L-tyrosyl-tRNA(Tyr) + AMP + diphosphate + H(+). Catalyzes the attachment of tyrosine to tRNA(Tyr) in a two-step reaction: tyrosine is first activated by ATP to form Tyr-AMP and then transferred to the acceptor end of tRNA(Tyr). The polypeptide is Tyrosine--tRNA ligase (Dehalococcoides mccartyi (strain ATCC BAA-2266 / KCTC 15142 / 195) (Dehalococcoides ethenogenes (strain 195))).